The following is a 353-amino-acid chain: MSCTGFWRKLASGEECGAAARLLGAVLAIPAALYGLVVRLRALAYARGLSTVRHLDRPVISVGNLTVGGTGKTPMVAYLARRLMARGKRVAVISRGYGGSLEGETRIVSDGRTIVLSAAEAGDEPVHLATSVPGLMTVIGTDRYTAGLLALEQLDPDVFILDDGYQHLRLHRDLNILLMDCNRPLGNGRTLPAGLLREPQTAVRRADLVVYTRCTGGKAPAVHGMIPSCRAGHALTGAALLPDGEVQPLAALRGLRGVACAGIAEPEGFFDALRREGLDIVAAIPFADHASYGEREVSTLREAAAGADYLITTGKDGVKLSAHLARLLPVYATVLEMRPLDPAPLEAALDKVL.

66–73 (TVGGTGKT) is an ATP binding site.

The protein belongs to the LpxK family.

The enzyme catalyses a lipid A disaccharide + ATP = a lipid IVA + ADP + H(+). The protein operates within glycolipid biosynthesis; lipid IV(A) biosynthesis; lipid IV(A) from (3R)-3-hydroxytetradecanoyl-[acyl-carrier-protein] and UDP-N-acetyl-alpha-D-glucosamine: step 6/6. Its function is as follows. Transfers the gamma-phosphate of ATP to the 4'-position of a tetraacyldisaccharide 1-phosphate intermediate (termed DS-1-P) to form tetraacyldisaccharide 1,4'-bis-phosphate (lipid IVA). In Geobacter sulfurreducens (strain ATCC 51573 / DSM 12127 / PCA), this protein is Tetraacyldisaccharide 4'-kinase.